The primary structure comprises 310 residues: Bacteriochlorophyll synthase 34 kDa chain (310 aa).

Over residues 1–13 the composition is skewed to polar residues; it reads MSDMSDQTRLSSP. A disordered region spans residues 1 to 20; that stretch reads MSDMSDQTRLSSPPSLPLHK. The next 8 membrane-spanning stretches (helical) occupy residues 39-59, 67-87, 112-132, 134-154, 166-186, 187-207, 248-268, and 287-307; these read VTWFAPTWAFMCGAIASGALG, LLLGMFMAGPILCGLSQVVND, HVYILTAVLTWIGASIALFLG, QVAFFVALGLVFALAYSLRPI, LVAISYEGLAWMAGHAAFAPL, TGESVTIALLYSLGAHGIMTV, VIGLLFHWGHPVAATVVAILL, and VFFNATAIMLYVWGMLAAAIG.

Its subcellular location is the cell membrane. Its pathway is porphyrin-containing compound metabolism; bacteriochlorophyll biosynthesis (light-independent). Catalyzes the esterification of bacteriochlorophyllide a by geranylgeraniol-PPi. The sequence is that of Bacteriochlorophyll synthase 34 kDa chain (bchG) from Chloroflexus aurantiacus (strain ATCC 29366 / DSM 635 / J-10-fl).